Here is a 232-residue protein sequence, read N- to C-terminus: Ribose-5-phosphate isomerase A (232 aa).

Substrate contacts are provided by residues Thr28 to Thr31, Asp83 to Asp86, and Lys96 to Gly99. The active-site Proton acceptor is Glu105. Lys123 is a binding site for substrate.

The protein belongs to the ribose 5-phosphate isomerase family. Homodimer.

It catalyses the reaction aldehydo-D-ribose 5-phosphate = D-ribulose 5-phosphate. It participates in carbohydrate degradation; pentose phosphate pathway; D-ribose 5-phosphate from D-ribulose 5-phosphate (non-oxidative stage): step 1/1. Catalyzes the reversible conversion of ribose-5-phosphate to ribulose 5-phosphate. The chain is Ribose-5-phosphate isomerase A from Rhodopseudomonas palustris (strain BisB5).